A 160-amino-acid polypeptide reads, in one-letter code: Transcriptional repressor NrdR (160 aa).

The segment at 3–34 (CPYCQYEDTQVKDSRPSEEGTVIRRRRICSVC) is a zinc-finger region. Residues 49–139 (LLVLKKSGRY…VYRDFRNASD (91 aa)) enclose the ATP-cone domain.

It belongs to the NrdR family. Zn(2+) is required as a cofactor.

Its function is as follows. Negatively regulates transcription of bacterial ribonucleotide reductase nrd genes and operons by binding to NrdR-boxes. The chain is Transcriptional repressor NrdR from Bartonella henselae (strain ATCC 49882 / DSM 28221 / CCUG 30454 / Houston 1) (Rochalimaea henselae).